The chain runs to 314 residues: 4-hydroxy-3-methylbut-2-enyl diphosphate reductase (314 aa).

A [4Fe-4S] cluster-binding site is contributed by Cys12. His41 and His74 together coordinate (2E)-4-hydroxy-3-methylbut-2-enyl diphosphate. Dimethylallyl diphosphate-binding residues include His41 and His74. Residues His41 and His74 each contribute to the isopentenyl diphosphate site. Cys96 provides a ligand contact to [4Fe-4S] cluster. His124 lines the (2E)-4-hydroxy-3-methylbut-2-enyl diphosphate pocket. His124 contributes to the dimethylallyl diphosphate binding site. His124 provides a ligand contact to isopentenyl diphosphate. Glu126 serves as the catalytic Proton donor. (2E)-4-hydroxy-3-methylbut-2-enyl diphosphate is bound at residue Thr167. Cys197 is a binding site for [4Fe-4S] cluster. 4 residues coordinate (2E)-4-hydroxy-3-methylbut-2-enyl diphosphate: Ser225, Ser226, Asn227, and Ser269. The dimethylallyl diphosphate site is built by Ser225, Ser226, Asn227, and Ser269. Isopentenyl diphosphate is bound by residues Ser225, Ser226, Asn227, and Ser269.

This sequence belongs to the IspH family. Requires [4Fe-4S] cluster as cofactor.

The enzyme catalyses isopentenyl diphosphate + 2 oxidized [2Fe-2S]-[ferredoxin] + H2O = (2E)-4-hydroxy-3-methylbut-2-enyl diphosphate + 2 reduced [2Fe-2S]-[ferredoxin] + 2 H(+). The catalysed reaction is dimethylallyl diphosphate + 2 oxidized [2Fe-2S]-[ferredoxin] + H2O = (2E)-4-hydroxy-3-methylbut-2-enyl diphosphate + 2 reduced [2Fe-2S]-[ferredoxin] + 2 H(+). It participates in isoprenoid biosynthesis; dimethylallyl diphosphate biosynthesis; dimethylallyl diphosphate from (2E)-4-hydroxy-3-methylbutenyl diphosphate: step 1/1. It functions in the pathway isoprenoid biosynthesis; isopentenyl diphosphate biosynthesis via DXP pathway; isopentenyl diphosphate from 1-deoxy-D-xylulose 5-phosphate: step 6/6. Its function is as follows. Catalyzes the conversion of 1-hydroxy-2-methyl-2-(E)-butenyl 4-diphosphate (HMBPP) into a mixture of isopentenyl diphosphate (IPP) and dimethylallyl diphosphate (DMAPP). Acts in the terminal step of the DOXP/MEP pathway for isoprenoid precursor biosynthesis. In Aliivibrio fischeri (strain ATCC 700601 / ES114) (Vibrio fischeri), this protein is 4-hydroxy-3-methylbut-2-enyl diphosphate reductase.